The primary structure comprises 439 residues: Polygalacturonase QRT2 (439 aa).

The N-terminal stretch at 1 to 21 (MYEKIIILSVFLLTFLPSCFS) is a signal peptide. Residues 43–69 (RQHQHGHNTRNSHLKNRHGYAPRSSPR) form a disordered region. Basic residues predominate over residues 44-62 (QHQHGHNTRNSHLKNRHGY). PbH1 repeat units follow at residues 201–250 (CNNL…HVSG) and 251–272 (TQNI…SIVS). Asp265 functions as the Proton donor in the catalytic mechanism. Residue His288 is part of the active site. PbH1 repeat units follow at residues 304–325 (VSNV…RIKT) and 333–354 (AKNI…IINQ).

This sequence belongs to the glycosyl hydrolase 28 family. Expressed predominantly in roots with lower expression levels in rosette leaves, flower buds and siliques. Bearly detected in seeds. Found in flowers undergoing floral organ abscission. Also expressed early in anther development, at the time of microspore separation.

It localises to the secreted. The protein resides in the cell wall. It catalyses the reaction (1,4-alpha-D-galacturonosyl)n+m + H2O = (1,4-alpha-D-galacturonosyl)n + (1,4-alpha-D-galacturonosyl)m.. Its function is as follows. Polygalacturonase required for cell type-specific pectin degradation to separate microspores. Involved in anther dehiscence and floral organ abscission. In Arabidopsis thaliana (Mouse-ear cress), this protein is Polygalacturonase QRT2 (QRT2).